The primary structure comprises 69 residues: Brevinin-1Pb (69 aa).

The first 20 residues, 1-20 (MFTLNKFLLLLFFLGTINLS), serve as a signal peptide directing secretion. A propeptide spanning residues 21–43 (FCEEENAEEERIDEPDETDVEVE) is cleaved from the precursor. Cysteines 63 and 69 form a disulfide.

Expressed by the skin glands.

It localises to the secreted. Its function is as follows. Antibacterial activity against Gram-positive bacterium S.aureus and Gram-negative bacterium E.coli. Has activity against C.albicans. This is Brevinin-1Pb from Lithobates pipiens (Northern leopard frog).